A 232-amino-acid polypeptide reads, in one-letter code: Octanoyltransferase (232 aa).

A BPL/LPL catalytic domain is found at 44–219 (EHTGDELWVV…QLARQFGLVL (176 aa)). Substrate is bound by residues 83–90 (RGGQVTYH), 150–152 (ALG), and 163–165 (GLS). Cys181 acts as the Acyl-thioester intermediate in catalysis.

This sequence belongs to the LipB family.

It localises to the cytoplasm. The enzyme catalyses octanoyl-[ACP] + L-lysyl-[protein] = N(6)-octanoyl-L-lysyl-[protein] + holo-[ACP] + H(+). Its pathway is protein modification; protein lipoylation via endogenous pathway; protein N(6)-(lipoyl)lysine from octanoyl-[acyl-carrier-protein]: step 1/2. Catalyzes the transfer of endogenously produced octanoic acid from octanoyl-acyl-carrier-protein onto the lipoyl domains of lipoate-dependent enzymes. Lipoyl-ACP can also act as a substrate although octanoyl-ACP is likely to be the physiological substrate. The sequence is that of Octanoyltransferase from Xanthomonas campestris pv. campestris (strain B100).